The primary structure comprises 193 residues: dTTP/UTP pyrophosphatase (193 aa).

Residue Asp-71 is the Proton acceptor of the active site.

The protein belongs to the Maf family. YhdE subfamily. A divalent metal cation is required as a cofactor.

The protein localises to the cytoplasm. It catalyses the reaction dTTP + H2O = dTMP + diphosphate + H(+). The enzyme catalyses UTP + H2O = UMP + diphosphate + H(+). Nucleoside triphosphate pyrophosphatase that hydrolyzes dTTP and UTP. May have a dual role in cell division arrest and in preventing the incorporation of modified nucleotides into cellular nucleic acids. This is dTTP/UTP pyrophosphatase from Dictyoglomus turgidum (strain DSM 6724 / Z-1310).